We begin with the raw amino-acid sequence, 123 residues long: Small ribosomal subunit protein uS12 (123 aa).

The interval 1–30 (MPTIQQLVRKGRQDKVEKNKTPALEGSPQR) is disordered. The segment covering 11 to 20 (GRQDKVEKNK) has biased composition (basic and acidic residues). Residue aspartate 89 is modified to 3-methylthioaspartic acid.

Belongs to the universal ribosomal protein uS12 family. In terms of assembly, part of the 30S ribosomal subunit. Contacts proteins S8 and S17. May interact with IF1 in the 30S initiation complex.

In terms of biological role, with S4 and S5 plays an important role in translational accuracy. Interacts with and stabilizes bases of the 16S rRNA that are involved in tRNA selection in the A site and with the mRNA backbone. Located at the interface of the 30S and 50S subunits, it traverses the body of the 30S subunit contacting proteins on the other side and probably holding the rRNA structure together. The combined cluster of proteins S8, S12 and S17 appears to hold together the shoulder and platform of the 30S subunit. This chain is Small ribosomal subunit protein uS12 (rpsL), found in Streptomyces avermitilis (strain ATCC 31267 / DSM 46492 / JCM 5070 / NBRC 14893 / NCIMB 12804 / NRRL 8165 / MA-4680).